We begin with the raw amino-acid sequence, 109 residues long: Ribonuclease P protein component (109 aa).

Belongs to the RnpA family. In terms of assembly, consists of a catalytic RNA component (M1 or rnpB) and a protein subunit.

It catalyses the reaction Endonucleolytic cleavage of RNA, removing 5'-extranucleotides from tRNA precursor.. Functionally, RNaseP catalyzes the removal of the 5'-leader sequence from pre-tRNA to produce the mature 5'-terminus. It can also cleave other RNA substrates such as 4.5S RNA. The protein component plays an auxiliary but essential role in vivo by binding to the 5'-leader sequence and broadening the substrate specificity of the ribozyme. This is Ribonuclease P protein component from Mycoplasma mycoides subsp. mycoides SC (strain CCUG 32753 / NCTC 10114 / PG1).